The sequence spans 137 residues: Basic phospholipase A2 homolog W6D49 (137 aa).

The N-terminal stretch at 1 to 16 is a signal peptide; that stretch reads MRTLWILAVLLVSVDG. Cystine bridges form between Cys42–Cys131, Cys44–Cys60, Cys59–Cys111, Cys65–Cys137, Cys66–Cys104, Cys73–Cys97, and Cys91–Cys102. Residues 121-133 form an important for membrane-damaging activities in eukaryotes and bacteria; heparin-binding region; the sequence is KKQQFNTGIFCSK.

As to quaternary structure, monomer. As to expression, expressed by the venom gland.

The protein resides in the secreted. Its activity is regulated as follows. Heparin reduces its edema-inducing activity. Functionally, snake venom phospholipase A2 homolog that lacks enzymatic activity. Shows myotoxin activities and displays edema-inducing activities. A model of myotoxic mechanism has been proposed: an apo Lys49-PLA2 is activated by the entrance of a hydrophobic molecule (e.g. fatty acid) at the hydrophobic channel of the protein leading to a reorientation of a monomer. This reorientation causes a transition between 'inactive' to 'active' states, causing alignment of C-terminal and membrane-docking sites (MDoS) side-by-side and putting the membrane-disruption sites (MDiS) in the same plane, exposed to solvent and in a symmetric position for both monomers. The MDoS region stabilizes the toxin on membrane by the interaction of charged residues with phospholipid head groups. Subsequently, the MDiS region destabilizes the membrane with penetration of hydrophobic residues. This insertion causes a disorganization of the membrane, allowing an uncontrolled influx of ions (i.e. calcium and sodium), and eventually triggering irreversible intracellular alterations and cell death. In Calloselasma rhodostoma (Malayan pit viper), this protein is Basic phospholipase A2 homolog W6D49.